The chain runs to 536 residues: CTP synthase (536 aa).

The segment at 1 to 268 (MSFKSIFLTG…VDFLLSKFGF (268 aa)) is amidoligase domain. A CTP-binding site is contributed by Ser14. A UTP-binding site is contributed by Ser14. 15-20 (SLGKGL) lines the ATP pocket. Tyr55 contributes to the L-glutamine binding site. Asp72 is an ATP binding site. Mg(2+) is bound by residues Asp72 and Glu142. CTP is bound by residues 149 to 151 (DIE), 188 to 193 (KTKPTQ), and Lys224. UTP contacts are provided by residues 188 to 193 (KTKPTQ) and Lys224. One can recognise a Glutamine amidotransferase type-1 domain in the interval 294 to 532 (RIGLVGKYLE…LSAALDYSLE (239 aa)). Residue Gly353 participates in L-glutamine binding. Catalysis depends on Cys380, which acts as the Nucleophile; for glutamine hydrolysis. L-glutamine contacts are provided by residues 381-384 (LGMQ), Glu404, and Arg460. Residues His505 and Glu507 contribute to the active site.

It belongs to the CTP synthase family. In terms of assembly, homotetramer.

The enzyme catalyses UTP + L-glutamine + ATP + H2O = CTP + L-glutamate + ADP + phosphate + 2 H(+). The catalysed reaction is L-glutamine + H2O = L-glutamate + NH4(+). It catalyses the reaction UTP + NH4(+) + ATP = CTP + ADP + phosphate + 2 H(+). It participates in pyrimidine metabolism; CTP biosynthesis via de novo pathway; CTP from UDP: step 2/2. Its activity is regulated as follows. Allosterically activated by GTP, when glutamine is the substrate; GTP has no effect on the reaction when ammonia is the substrate. The allosteric effector GTP functions by stabilizing the protein conformation that binds the tetrahedral intermediate(s) formed during glutamine hydrolysis. Inhibited by the product CTP, via allosteric rather than competitive inhibition. Functionally, catalyzes the ATP-dependent amination of UTP to CTP with either L-glutamine or ammonia as the source of nitrogen. Regulates intracellular CTP levels through interactions with the four ribonucleotide triphosphates. In Chlamydia muridarum (strain MoPn / Nigg), this protein is CTP synthase.